The primary structure comprises 238 residues: Cysteine-rich venom protein pseudechetoxin-like (238 aa).

A signal peptide spans Met-1–Gly-19. A propeptide spanning residues Thr-20–Ser-28 is cleaved from the precursor. The region spanning Val-38–Tyr-164 is the SCP domain. Intrachain disulfides connect Cys-75–Cys-153, Cys-92–Cys-165, Cys-148–Cys-162, Cys-184–Cys-191, Cys-187–Cys-196, Cys-200–Cys-233, Cys-209–Cys-227, and Cys-218–Cys-231. The 34-residue stretch at Cys-200 to Cys-233 folds into the ShKT domain.

Belongs to the CRISP family. As to expression, expressed by the venom gland.

The protein localises to the secreted. Its function is as follows. Blocks olfactory (CNGA2) and retinal (CNGA1) CNG channel currents. Does not affect neither depolarization- nor caffeine-induced contraction of smooth muscle. This chain is Cysteine-rich venom protein pseudechetoxin-like, found in Hoplocephalus stephensii (Stephens's banded snake).